A 312-amino-acid chain; its full sequence is MIFSTLEHILTHISFSIVSIVITIHLITFLVDEIVKLYDSSEKGIIVTFFCITGLLVTRWISSGHFPLSDLYESLIFLSWSFSLIHIIPYFKNNVLILSKITGPSAIFTQGFATSGILTEIHQSGILVPALQSEWLIMHVSMMILGYAALLCGSLLSVALLVITFRKNRKLFYKSNGFVNESFLLGENVLENTSFSAKNYYRSQLIQQLDYWSYRVISLGFTFLTIGILSGAVWANEAWGSYWNWDPKETWAFITWIVFAIYLHTRTNINLRGANSAIIATIGFLIIWICYFGVNLLGIGLHSYGSFTSTFN.

8 helical membrane passes run 9-29, 44-64, 71-91, 111-131, 143-163, 216-236, 251-271, and 277-297; these read ILTHISFSIVSIVITIHLITF, GIIVTFFCITGLLVTRWISSG, LYESLIFLSWSFSLIHIIPYF, GFATSGILTEIHQSGILVPAL, MILGYAALLCGSLLSVALLVI, VISLGFTFLTIGILSGAVWAN, WAFITWIVFAIYLHTRTNINL, and AIIATIGFLIIWICYFGVNLL.

It belongs to the CcmF/CycK/Ccl1/NrfE/CcsA family. In terms of assembly, may interact with Ccs1.

The protein resides in the plastid. The protein localises to the chloroplast thylakoid membrane. In terms of biological role, required during biogenesis of c-type cytochromes (cytochrome c6 and cytochrome f) at the step of heme attachment. The chain is Cytochrome c biogenesis protein CcsA from Atropa belladonna (Belladonna).